We begin with the raw amino-acid sequence, 156 residues long: MRHYEVVFLVHPDQSEQLSAMMDRYRQIIETDGGCIHRLEDWGRRQLAYPIQKLYKAHYVLMNIECTPRTIEELTSAFRFNDAVLRDMVIRREEAITETSPLAKGEESGGRGYDSARSGRDRDESGGRGYDGARPGRDEDESKENTDRDEQSEDSE.

Residues 95–156 form a disordered region; that stretch reads AITETSPLAK…DRDEQSEDSE (62 aa). Basic and acidic residues predominate over residues 117-126; the sequence is RSGRDRDESG.

The protein belongs to the bacterial ribosomal protein bS6 family.

Functionally, binds together with bS18 to 16S ribosomal RNA. The chain is Small ribosomal subunit protein bS6 from Nitrosococcus oceani (strain ATCC 19707 / BCRC 17464 / JCM 30415 / NCIMB 11848 / C-107).